Here is a 196-residue protein sequence, read N- to C-terminus: Charged multivesicular body protein 1a (196 aa).

Residues 5–41 (LFQLKFTAKQLEKLAKKAEKDSNTEQAKVKKALQQKN) are a coiled coil. Residues 170–181 (QGASSVGESSTR) are compositionally biased toward polar residues. Residues 170–196 (QGASSVGESSTRTQEDQLSRRLASLRN) form a disordered region. Residues 185 to 195 (DQLSRRLASLR) carry the MIT-interacting motif motif.

The protein belongs to the SNF7 family. In terms of assembly, probable peripherally associated component of the endosomal sorting required for transport complex III (ESCRT-III).

The protein localises to the cytoplasm. It is found in the endosome membrane. Its function is as follows. Probable peripherally associated component of the endosomal sorting required for transport complex III (ESCRT-III) which is involved in multivesicular bodies (MVBs) formation and sorting of endosomal cargo proteins into MVBs. MVBs contain intraluminal vesicles (ILVs) that are generated by invagination and scission from the limiting membrane of the endosome and mostly are delivered to lysosomes enabling degradation of membrane proteins, such as stimulated growth factor receptors, lysosomal enzymes and lipids. The protein is Charged multivesicular body protein 1a (chmp1a) of Xenopus laevis (African clawed frog).